A 640-amino-acid polypeptide reads, in one-letter code: Threonine--tRNA ligase (640 aa).

The TGS domain occupies 1–61; it reads MVKITYPDNS…MQDSTIKLIT (61 aa). The segment at 242 to 533 is catalytic; that stretch reads DHRKLGPKLN…LIENFAGEFP (292 aa). Zn(2+) is bound by residues Cys-334, His-385, and His-510.

Belongs to the class-II aminoacyl-tRNA synthetase family. Homodimer. Zn(2+) serves as cofactor.

It localises to the cytoplasm. It carries out the reaction tRNA(Thr) + L-threonine + ATP = L-threonyl-tRNA(Thr) + AMP + diphosphate + H(+). Functionally, catalyzes the attachment of threonine to tRNA(Thr) in a two-step reaction: L-threonine is first activated by ATP to form Thr-AMP and then transferred to the acceptor end of tRNA(Thr). Also edits incorrectly charged L-seryl-tRNA(Thr). The protein is Threonine--tRNA ligase of Petrotoga mobilis (strain DSM 10674 / SJ95).